A 93-amino-acid polypeptide reads, in one-letter code: Antitoxin EndoAI (93 aa).

Belongs to the MazE/EndoAI family. As to quaternary structure, homodimer, forms a heterohexamer composed of alternating toxin and antitoxin homodimers which inhibits the toxin's endoribonuclease activity. Antitoxin prevents RNA binding to the endoribonuclease.

Functionally, antitoxin component of a type II toxin-antitoxin (TA) system. Antitoxin that directly inhibits activity of EndoA in vitro. Upon expression in E.coli counteracts inhibitory effect of endoribonuclease EndoA. The EndoA-EndoAI complex does not seem to bind its own promoter. This is Antitoxin EndoAI from Bacillus subtilis (strain 168).